The sequence spans 305 residues: tRNA-cytidine(32) 2-sulfurtransferase (305 aa).

Positions 1 to 20 are disordered; it reads MTAVLPLPQPLADPAPRDPR. A PP-loop motif motif is present at residues 59–64; the sequence is SGGKDS. [4Fe-4S] cluster is bound by residues cysteine 134, cysteine 137, and cysteine 225. Residues 282 to 305 form a disordered region; it reads DAPSGLDPDPRAWLSAGHATHDSD.

It belongs to the TtcA family. Homodimer. It depends on Mg(2+) as a cofactor. The cofactor is [4Fe-4S] cluster.

It localises to the cytoplasm. It carries out the reaction cytidine(32) in tRNA + S-sulfanyl-L-cysteinyl-[cysteine desulfurase] + AH2 + ATP = 2-thiocytidine(32) in tRNA + L-cysteinyl-[cysteine desulfurase] + A + AMP + diphosphate + H(+). The protein operates within tRNA modification. Catalyzes the ATP-dependent 2-thiolation of cytidine in position 32 of tRNA, to form 2-thiocytidine (s(2)C32). The sulfur atoms are provided by the cysteine/cysteine desulfurase (IscS) system. This Xanthomonas axonopodis pv. citri (strain 306) protein is tRNA-cytidine(32) 2-sulfurtransferase.